Consider the following 368-residue polypeptide: D-alanine--D-alanine ligase (368 aa).

The ATP-grasp domain maps to 141 to 350 (KMIWDYSGLP…YNELIMHLIE (210 aa)). 176–231 (EKDLEYPLFIKPCRAGSSVGAGMVKNRNELLEQAEESFLWDNKILVEACIEAREVE) is an ATP binding site. D303, E317, and N319 together coordinate Mg(2+).

It belongs to the D-alanine--D-alanine ligase family. Mg(2+) serves as cofactor. It depends on Mn(2+) as a cofactor.

The protein resides in the cytoplasm. It carries out the reaction 2 D-alanine + ATP = D-alanyl-D-alanine + ADP + phosphate + H(+). The protein operates within cell wall biogenesis; peptidoglycan biosynthesis. Its function is as follows. Cell wall formation. The chain is D-alanine--D-alanine ligase from Treponema denticola (strain ATCC 35405 / DSM 14222 / CIP 103919 / JCM 8153 / KCTC 15104).